The chain runs to 369 residues: UDP-N-acetylglucosamine--N-acetylmuramyl-(pentapeptide) pyrophosphoryl-undecaprenol N-acetylglucosamine transferase (369 aa).

Residues 15–17 (TGG), Asn-126, Arg-169, Ser-197, and Gln-299 contribute to the UDP-N-acetyl-alpha-D-glucosamine site.

It belongs to the glycosyltransferase 28 family. MurG subfamily.

It is found in the cell inner membrane. It carries out the reaction di-trans,octa-cis-undecaprenyl diphospho-N-acetyl-alpha-D-muramoyl-L-alanyl-D-glutamyl-meso-2,6-diaminopimeloyl-D-alanyl-D-alanine + UDP-N-acetyl-alpha-D-glucosamine = di-trans,octa-cis-undecaprenyl diphospho-[N-acetyl-alpha-D-glucosaminyl-(1-&gt;4)]-N-acetyl-alpha-D-muramoyl-L-alanyl-D-glutamyl-meso-2,6-diaminopimeloyl-D-alanyl-D-alanine + UDP + H(+). It functions in the pathway cell wall biogenesis; peptidoglycan biosynthesis. In terms of biological role, cell wall formation. Catalyzes the transfer of a GlcNAc subunit on undecaprenyl-pyrophosphoryl-MurNAc-pentapeptide (lipid intermediate I) to form undecaprenyl-pyrophosphoryl-MurNAc-(pentapeptide)GlcNAc (lipid intermediate II). The protein is UDP-N-acetylglucosamine--N-acetylmuramyl-(pentapeptide) pyrophosphoryl-undecaprenol N-acetylglucosamine transferase of Methylorubrum extorquens (strain CM4 / NCIMB 13688) (Methylobacterium extorquens).